The primary structure comprises 141 residues: uncharacterized protein (141 aa).

The 136-residue stretch at 4–139 (RTQMMYDMET…LIELFSKLDK (136 aa)) folds into the HTH marR-type domain. The H-T-H motif DNA-binding region spans 53-76 (VTEFAPILEVSASHITAVTDALVE).

This is an uncharacterized protein from Bacillus subtilis (strain 168).